A 1328-amino-acid polypeptide reads, in one-letter code: Protein turtle homolog B (1328 aa).

Positions 1 to 20 (MIWYVATLIASVISTRGLVA) are cleaved as a signal peptide. The Extracellular segment spans residues 21–722 (QVAHGLREEP…DLTDDGLARP (702 aa)). Ig-like domains follow at residues 30-115 (PEFV…ECKV), 139-226 (PTFT…LLVQ), 228-320 (PPFI…AYLT), 324-415 (PARV…ARLV), and 420-504 (PYFT…THLT). 2 disulfides stabilise this stretch: Cys45–Cys113 and Cys161–Cys208. N-linked (GlcNAc...) asparagine glycosylation is found at Asn241 and Asn258. 3 disulfide bridges follow: Cys250–Cys303, Cys346–Cys397, and Cys442–Cys488. 2 Fibronectin type-III domains span residues 512-604 (APGS…TLAF) and 614-708 (LVTP…STDI). An N-linked (GlcNAc...) asparagine glycan is attached at Asn624. A helical transmembrane segment spans residues 723 to 743 (VLAGIVATICFLAAAILFSTL). Topologically, residues 744 to 1328 (AACFVNKQRK…EPPTTLPTSG (585 aa)) are cytoplasmic. Disordered stretches follow at residues 758–817 (RKKD…EKEL), 914–1040 (PMSS…PEPW), and 1107–1328 (SPGR…PTSG). Phosphoserine is present on residues Ser775, Ser783, and Ser794. Residues 990-1001 (SPLSSVMSSPPL) show a composition bias toward low complexity. 3 stretches are compositionally biased toward polar residues: residues 1018–1033 (ENAS…TPTG), 1129–1141 (LVSQ…TSQG), and 1199–1214 (SRLS…SRTG). At Arg1136 the chain carries Omega-N-methylarginine. Ser1207 and Ser1215 each carry phosphoserine. A compositionally biased stretch (low complexity) spans 1246-1273 (SFSRKSTPSSTGSPSQSSRSGSPSYRPT). 2 stretches are compositionally biased toward pro residues: residues 1284 to 1295 (PSPPPGPAPPAP) and 1318 to 1328 (PEPPTTLPTSG).

Belongs to the immunoglobulin superfamily. Turtle family. Found in a complex with MAGI2 and NLGN2, where it interacts with MAGI2 (via PDZ 5 and PDZ 6 domains). N-glycosylated and sialylated. Not significantly O-glycosylated. In terms of tissue distribution, detected primarily in brain, including cortex, hippocampus, cerebellum and striatum. Largely restricted to inhibitory GABAergic interneurons (at protein level).

The protein localises to the postsynaptic cell membrane. It is found in the postsynaptic density. Functionally, transmembrane protein which is abundantly expressed in interneurons, where it may regulate inhibitory synapse development. May mediate homophilic cell adhesion. The polypeptide is Protein turtle homolog B (Rattus norvegicus (Rat)).